A 166-amino-acid chain; its full sequence is Disulfide bond formation protein B (166 aa).

The Cytoplasmic segment spans residues 1 to 12 (MKITKLPSYRQT). A helical membrane pass occupies residues 13–29 (ALIIFAGCVGLILAALY). Over 30–47 (MQEVLGLHPCPLCITQRI) the chain is Periplasmic. Residues cysteine 39 and cysteine 42 are joined by a disulfide bond. A helical membrane pass occupies residues 48–64 (FIIGVGLISLIAAIHNP). The Cytoplasmic segment spans residues 65-70 (AALGRK). The chain crosses the membrane as a helical span at residues 71-88 (VYGCLATLSGVIGAGVSA). At 89–145 (RHVWLQNLPEDQVPACGPDLAYMFDAFPLLDALKLLFAGDGNCADVVASFLGLSIPG) the chain is on the periplasmic side. Cysteine 104 and cysteine 131 are oxidised to a cystine. A helical membrane pass occupies residues 146-164 (WTFVAFVGLIAISVWQGLR). Over 165-166 (KA) the chain is Cytoplasmic.

It belongs to the DsbB family.

It localises to the cell inner membrane. In terms of biological role, required for disulfide bond formation in some periplasmic proteins. Acts by oxidizing the DsbA protein. In Saccharophagus degradans (strain 2-40 / ATCC 43961 / DSM 17024), this protein is Disulfide bond formation protein B.